Consider the following 417-residue polypeptide: Hydroxysteroid dehydrogenase-like protein 2 (417 aa).

NADP(+)-binding positions include 17–23 (GASRGIG), K42, and D74. The Proton acceptor role is filled by Y168. K172 is a binding site for NADP(+). Residues 306–414 (ASPLQETFKA…KLEKILGQMN (109 aa)) form the SCP2 domain.

It belongs to the short-chain dehydrogenases/reductases (SDR) family.

It localises to the peroxisome. It is found in the mitochondrion. Has apparently no steroid dehydrogenase activity. Might act as a metabolic regulator that affects systemic adaptation to nutritional cues. This Xenopus laevis (African clawed frog) protein is Hydroxysteroid dehydrogenase-like protein 2 (hsdl2).